Reading from the N-terminus, the 194-residue chain is UPF0301 protein CBU_2093 (194 aa).

The protein belongs to the UPF0301 (AlgH) family.

The protein is UPF0301 protein CBU_2093 of Coxiella burnetii (strain RSA 493 / Nine Mile phase I).